Consider the following 170-residue polypeptide: Two-component response regulator ORR6 (170 aa).

A Response regulatory domain is found at 51-170 (HVLAVDDSSV…DVSRLCSRIR (120 aa)). Position 103 is a 4-aspartylphosphate (Asp-103).

Belongs to the ARR family. Type-A subfamily. In terms of processing, two-component system major event consists of a His-to-Asp phosphorelay between a sensor histidine kinase (HK) and a response regulator (RR). In plants, the His-to-Asp phosphorelay involves an additional intermediate named Histidine-containing phosphotransfer protein (HPt). This multistep phosphorelay consists of a His-Asp-His-Asp sequential transfer of a phosphate group between first a His and an Asp of the HK protein, followed by the transfer to a conserved His of the HPt protein and finally the transfer to an Asp in the receiver domain of the RR protein. In terms of tissue distribution, expressed in roots, leaf blades, leaf sheaths, shoot apex, flowers and panicles.

In terms of biological role, functions as a response regulator involved in His-to-Asp phosphorelay signal transduction system. Phosphorylation of the Asp residue in the receiver domain activates the ability of the protein to promote the transcription of target genes. Type-A response regulators seem to act as negative regulators of the cytokinin signaling. The protein is Two-component response regulator ORR6 of Oryza sativa subsp. japonica (Rice).